The following is a 1124-amino-acid chain: PAN2-PAN3 deadenylation complex catalytic subunit PAN2 (1124 aa).

4 WD repeats span residues 19 to 58 (IDNS…IPMP), 118 to 157 (PGFN…TTSF), 158 to 195 (NHTG…TVKS), and 309 to 348 (SSNT…SKNF). The tract at residues 351–484 (FPSYLEQPDF…EYKLSNKFEV (134 aa)) is linker. The region spanning 484–861 (VPNCYSNLKI…KPIIVMYQLA (378 aa)) is the USP domain. The 175-residue stretch at 917–1091 (IAIDAEFVAL…EDANTALLLY (175 aa)) folds into the Exonuclease domain. A divalent metal cation contacts are provided by Asp920, Glu922, Asp1030, and Asp1083.

The protein belongs to the peptidase C19 family. PAN2 subfamily. As to quaternary structure, forms a heterotrimer with an asymmetric homodimer of the regulatory subunit PAN3 to form the poly(A)-nuclease (PAN) deadenylation complex. The cofactor is a divalent metal cation.

It localises to the cytoplasm. The enzyme catalyses Exonucleolytic cleavage of poly(A) to 5'-AMP.. Positively regulated by the regulatory subunit PAN3. In terms of biological role, catalytic subunit of the poly(A)-nuclease (PAN) deadenylation complex, one of two cytoplasmic mRNA deadenylases involved in mRNA turnover. PAN specifically shortens poly(A) tails of RNA and the activity is stimulated by poly(A)-binding protein PAB1. PAN deadenylation is followed by rapid degradation of the shortened mRNA tails by the CCR4-NOT complex. Deadenylated mRNAs are then degraded by two alternative mechanisms, namely exosome-mediated 3'-5' exonucleolytic degradation, or deadenylation-dependent mRNA decaping and subsequent 5'-3' exonucleolytic degradation by XRN1. May also be involved in post-transcriptional maturation of mRNA poly(A) tails. The sequence is that of PAN2-PAN3 deadenylation complex catalytic subunit PAN2 from Debaryomyces hansenii (strain ATCC 36239 / CBS 767 / BCRC 21394 / JCM 1990 / NBRC 0083 / IGC 2968) (Yeast).